Here is a 492-residue protein sequence, read N- to C-terminus: GTPase-GDP dissociation stimulator arz1 (492 aa).

The protein localises to the cytoplasm. It localises to the nucleus. Probably acts as a GEF (guanine nucleotide exchange factor) for the Rho family of small GTP-binding proteins (G proteins) that stimulates the dissociation of GDP to enable subsequent binding of GTP. May also chaperone the processing and/or trafficking of small GTPases independently of GEF activity. May be involved in the control of polarized cell growth via CDC42-mediated signaling. May also be involved in the control of cell-wall organization via RHO1-mediated signaling. The protein is GTPase-GDP dissociation stimulator arz1 of Schizosaccharomyces pombe (strain 972 / ATCC 24843) (Fission yeast).